The chain runs to 101 residues: Small ribosomal subunit protein uS14 (101 aa).

The segment at 1-20 (MAKTSAVNRNKMRERMASRD) is disordered. Residues 11-20 (KMRERMASRD) show a composition bias toward basic and acidic residues.

This sequence belongs to the universal ribosomal protein uS14 family. In terms of assembly, part of the 30S ribosomal subunit. Contacts proteins S3 and S10.

Functionally, binds 16S rRNA, required for the assembly of 30S particles and may also be responsible for determining the conformation of the 16S rRNA at the A site. The chain is Small ribosomal subunit protein uS14 from Granulibacter bethesdensis (strain ATCC BAA-1260 / CGDNIH1).